The chain runs to 347 residues: Cell shape-determining protein MreB (347 aa).

ATP contacts are provided by residues threonine 19–asparagine 21, glycine 168–threonine 170, glutamate 216–lysine 219, and glycine 296–leucine 299.

Belongs to the FtsA/MreB family. As to quaternary structure, forms polymers.

It localises to the cytoplasm. Functionally, forms membrane-associated dynamic filaments that are essential for cell shape determination. Acts by regulating cell wall synthesis and cell elongation, and thus cell shape. A feedback loop between cell geometry and MreB localization may maintain elongated cell shape by targeting cell wall growth to regions of negative cell wall curvature. This chain is Cell shape-determining protein MreB, found in Escherichia coli O6:H1 (strain CFT073 / ATCC 700928 / UPEC).